Consider the following 428-residue polypeptide: Aspartate--tRNA(Asp) ligase (428 aa).

Position 166 (Glu166) interacts with L-aspartate. Positions 188-191 (QLYK) are aspartate. Residue Arg210 participates in L-aspartate binding. Residues 210-212 (RAE), 218-220 (RHL), and Glu351 each bind ATP. Mg(2+) contacts are provided by Glu351 and Ser354. L-aspartate is bound by residues Ser354 and Arg358. 399–402 (GLER) lines the ATP pocket.

This sequence belongs to the class-II aminoacyl-tRNA synthetase family. Type 2 subfamily. In terms of assembly, homodimer. The cofactor is Mg(2+).

It localises to the cytoplasm. The enzyme catalyses tRNA(Asp) + L-aspartate + ATP = L-aspartyl-tRNA(Asp) + AMP + diphosphate. Catalyzes the attachment of L-aspartate to tRNA(Asp) in a two-step reaction: L-aspartate is first activated by ATP to form Asp-AMP and then transferred to the acceptor end of tRNA(Asp). The polypeptide is Aspartate--tRNA(Asp) ligase (Thermoplasma volcanium (strain ATCC 51530 / DSM 4299 / JCM 9571 / NBRC 15438 / GSS1)).